Consider the following 471-residue polypeptide: tRNA-2-methylthio-N(6)-dimethylallyladenosine synthase (471 aa).

Residues 36–154 (KTYHIITYGC…FPQLLYKAIT (119 aa)) form the MTTase N-terminal domain. Cys45, Cys81, Cys115, Cys191, Cys195, and Cys198 together coordinate [4Fe-4S] cluster. Residues 177-407 (RREGVSAFVN…VKLVEEIALK (231 aa)) form the Radical SAM core domain. Residues 410–471 (QQMLGKVCEI…SRHWLYGEVI (62 aa)) enclose the TRAM domain.

It belongs to the methylthiotransferase family. MiaB subfamily. As to quaternary structure, monomer. Requires [4Fe-4S] cluster as cofactor.

The protein resides in the cytoplasm. It carries out the reaction N(6)-dimethylallyladenosine(37) in tRNA + (sulfur carrier)-SH + AH2 + 2 S-adenosyl-L-methionine = 2-methylsulfanyl-N(6)-dimethylallyladenosine(37) in tRNA + (sulfur carrier)-H + 5'-deoxyadenosine + L-methionine + A + S-adenosyl-L-homocysteine + 2 H(+). In terms of biological role, catalyzes the methylthiolation of N6-(dimethylallyl)adenosine (i(6)A), leading to the formation of 2-methylthio-N6-(dimethylallyl)adenosine (ms(2)i(6)A) at position 37 in tRNAs that read codons beginning with uridine. In Caldicellulosiruptor saccharolyticus (strain ATCC 43494 / DSM 8903 / Tp8T 6331), this protein is tRNA-2-methylthio-N(6)-dimethylallyladenosine synthase.